A 514-amino-acid chain; its full sequence is 2,3-bisphosphoglycerate-independent phosphoglycerate mutase (514 aa).

Mn(2+) contacts are provided by Asp15 and Ser65. Ser65 (phosphoserine intermediate) is an active-site residue. Residues His126, 156–157, Arg188, Arg194, 261–264, and Lys335 contribute to the substrate site; these read RD and RADR. Mn(2+) is bound by residues Asp403, His407, Asp444, His445, and His462.

It belongs to the BPG-independent phosphoglycerate mutase family. Monomer. Mn(2+) is required as a cofactor.

It carries out the reaction (2R)-2-phosphoglycerate = (2R)-3-phosphoglycerate. Its pathway is carbohydrate degradation; glycolysis; pyruvate from D-glyceraldehyde 3-phosphate: step 3/5. Functionally, catalyzes the interconversion of 2-phosphoglycerate and 3-phosphoglycerate. The polypeptide is 2,3-bisphosphoglycerate-independent phosphoglycerate mutase (Syntrophotalea carbinolica (strain DSM 2380 / NBRC 103641 / GraBd1) (Pelobacter carbinolicus)).